The sequence spans 151 residues: Ubiquitin-conjugating enzyme E2 N (151 aa).

The 147-residue stretch at 3–149 folds into the UBC core domain; it reads SLPRRIIKET…AREWTQKYAV (147 aa). Cysteine 87 (glycyl thioester intermediate) is an active-site residue.

Belongs to the ubiquitin-conjugating enzyme family.

It carries out the reaction S-ubiquitinyl-[E1 ubiquitin-activating enzyme]-L-cysteine + [E2 ubiquitin-conjugating enzyme]-L-cysteine = [E1 ubiquitin-activating enzyme]-L-cysteine + S-ubiquitinyl-[E2 ubiquitin-conjugating enzyme]-L-cysteine.. It functions in the pathway protein modification; protein ubiquitination. Catalyzes the covalent attachment of ubiquitin to other proteins. In Drosophila melanogaster (Fruit fly), this protein is Ubiquitin-conjugating enzyme E2 N (ben).